A 385-amino-acid polypeptide reads, in one-letter code: Putative 8-amino-7-oxononanoate synthase (385 aa).

Arginine 21 contributes to the substrate binding site. 108-109 (GY) is a binding site for pyridoxal 5'-phosphate. Position 133 (histidine 133) interacts with substrate. Residues serine 182, 207–210 (DEAH), and 234–237 (TFGK) each bind pyridoxal 5'-phosphate. The residue at position 237 (lysine 237) is an N6-(pyridoxal phosphate)lysine. Serine 351 is a binding site for substrate.

The protein belongs to the class-II pyridoxal-phosphate-dependent aminotransferase family. BioF subfamily. Homodimer. Requires pyridoxal 5'-phosphate as cofactor.

It carries out the reaction 6-carboxyhexanoyl-[ACP] + L-alanine + H(+) = (8S)-8-amino-7-oxononanoate + holo-[ACP] + CO2. It participates in cofactor biosynthesis; biotin biosynthesis. In terms of biological role, catalyzes the decarboxylative condensation of pimeloyl-[acyl-carrier protein] and L-alanine to produce 8-amino-7-oxononanoate (AON), [acyl-carrier protein], and carbon dioxide. This is Putative 8-amino-7-oxononanoate synthase (bioF) from Desulfosudis oleivorans (strain DSM 6200 / JCM 39069 / Hxd3) (Desulfococcus oleovorans).